A 235-amino-acid polypeptide reads, in one-letter code: Urease accessory protein UreF (235 aa).

It belongs to the UreF family. As to quaternary structure, ureD, UreF and UreG form a complex that acts as a GTP-hydrolysis-dependent molecular chaperone, activating the urease apoprotein by helping to assemble the nickel containing metallocenter of UreC. The UreE protein probably delivers the nickel.

Its subcellular location is the cytoplasm. Required for maturation of urease via the functional incorporation of the urease nickel metallocenter. The chain is Urease accessory protein UreF from Ureaplasma urealyticum serovar 10 (strain ATCC 33699 / Western).